The chain runs to 400 residues: Subtilisin-like protease 11 (400 aa).

An N-terminal signal peptide occupies residues 1 to 19; sequence MGLFTVVFTAIAALSAVDA. Residues 20-117 constitute a propeptide that is removed on maturation; the sequence is AELLRSPNSK…VEHDRYVYID (98 aa). Residues 35–116 form the Inhibitor I9 domain; sequence SYLVVMKDSV…FVEHDRYVYI (82 aa). The Peptidase S8 domain maps to 127 to 400; the sequence is SWGLGRVSHR…NKLLYNGSGQ (274 aa). An N-linked (GlcNAc...) asparagine glycan is attached at asparagine 138. Residues aspartate 159 and histidine 191 each act as charge relay system in the active site. 3 N-linked (GlcNAc...) asparagine glycosylation sites follow: asparagine 252, asparagine 336, and asparagine 337. Serine 346 serves as the catalytic Charge relay system. 2 N-linked (GlcNAc...) asparagine glycosylation sites follow: asparagine 388 and asparagine 396.

It belongs to the peptidase S8 family.

The protein localises to the secreted. In terms of biological role, secreted subtilisin-like serine protease with keratinolytic activity that contributes to pathogenicity. This is Subtilisin-like protease 11 (SUB11) from Arthroderma gypseum (strain ATCC MYA-4604 / CBS 118893) (Microsporum gypseum).